The sequence spans 427 residues: Imidazolonepropionase (427 aa).

2 residues coordinate Fe(3+): His96 and His98. 2 residues coordinate Zn(2+): His96 and His98. Residues Arg105, Tyr168, and His201 each contribute to the 4-imidazolone-5-propanoate site. Position 168 (Tyr168) interacts with N-formimidoyl-L-glutamate. Residue His265 coordinates Fe(3+). His265 lines the Zn(2+) pocket. Gln268 serves as a coordination point for 4-imidazolone-5-propanoate. Residue Asp340 participates in Fe(3+) binding. Zn(2+) is bound at residue Asp340. Residues Asn342 and Gly344 each contribute to the N-formimidoyl-L-glutamate site. Thr345 contacts 4-imidazolone-5-propanoate.

This sequence belongs to the metallo-dependent hydrolases superfamily. HutI family. Zn(2+) is required as a cofactor. Fe(3+) serves as cofactor.

It is found in the cytoplasm. The enzyme catalyses 4-imidazolone-5-propanoate + H2O = N-formimidoyl-L-glutamate. It participates in amino-acid degradation; L-histidine degradation into L-glutamate; N-formimidoyl-L-glutamate from L-histidine: step 3/3. Its function is as follows. Catalyzes the hydrolytic cleavage of the carbon-nitrogen bond in imidazolone-5-propanoate to yield N-formimidoyl-L-glutamate. It is the third step in the universal histidine degradation pathway. The sequence is that of Imidazolonepropionase from Psychrobacter cryohalolentis (strain ATCC BAA-1226 / DSM 17306 / VKM B-2378 / K5).